Reading from the N-terminus, the 311-residue chain is Heme A synthase (311 aa).

The Cytoplasmic segment spans residues methionine 1–lysine 6. A helical membrane pass occupies residues tryptophan 7–threonine 27. The Extracellular portion of the chain corresponds to lysine 28–arginine 62. Cysteine 35 and cysteine 42 are disulfide-bonded. Glutamate 58 is a catalytic residue. Heme o is bound at residue histidine 61. The helical transmembrane segment at leucine 63–tyrosine 83 threads the bilayer. Residues lysine 84–threonine 91 are Cytoplasmic-facing. Residues leucine 92 to valine 112 form a helical membrane-spanning segment. The Extracellular portion of the chain corresponds to tryptophan 113–alanine 121. The helical transmembrane segment at isoleucine 122–phenylalanine 142 threads the bilayer. Histidine 123 serves as a coordination point for heme o. Residues glutamate 143–methionine 159 lie on the Cytoplasmic side of the membrane. A helical membrane pass occupies residues lysine 160–valine 180. The Extracellular portion of the chain corresponds to arginine 181–methionine 211. An intrachain disulfide couples cysteine 189 to cysteine 195. Residues glycine 212–isoleucine 232 traverse the membrane as a helical segment. Residue histidine 213 coordinates heme b. The Cytoplasmic segment spans residues arginine 233–tryptophan 243. The chain crosses the membrane as a helical span at residues glycine 244–phenylalanine 264. Topologically, residues threonine 265 to methionine 271 are extracellular. The chain crosses the membrane as a helical span at residues alanine 272–leucine 292. Residue histidine 275 participates in heme b binding. The Cytoplasmic portion of the chain corresponds to glycine 293–lysine 311.

The protein belongs to the COX15/CtaA family. Type 1 subfamily. Interacts with CtaB. Heme b is required as a cofactor.

Its subcellular location is the cell membrane. The catalysed reaction is Fe(II)-heme o + 2 A + H2O = Fe(II)-heme a + 2 AH2. It functions in the pathway porphyrin-containing compound metabolism; heme A biosynthesis; heme A from heme O: step 1/1. In terms of biological role, catalyzes the conversion of heme O to heme A by two successive hydroxylations of the methyl group at C8. The first hydroxylation forms heme I, the second hydroxylation results in an unstable dihydroxymethyl group, which spontaneously dehydrates, resulting in the formyl group of heme A. The chain is Heme A synthase from Bacillus cereus (strain 03BB102).